The primary structure comprises 290 residues: L-cysteine S-thiosulfotransferase subunit SoxA (290 aa).

A signal peptide spans 1–26 (MPRFTKTKGTLAATALGLALAGAAFA). Residues Asp78 and Asp81 each contribute to the Zn(2+) site. The Cytochrome c domain occupies 78–171 (DDFDNPAMVF…DMLSLISLQS (94 aa)). Positions 106, 109, 110, and 143 each coordinate heme c. Position 190 (His190) interacts with Zn(2+). Residues Cys206, Cys209, and His210 each coordinate heme c. Residue Arg247 participates in substrate binding. Residue Cys251 participates in heme c binding. The active-site Cysteine persulfide intermediate is the Cys251. Asp266 lines the Zn(2+) pocket.

Belongs to the SoxA family. In terms of assembly, heterodimer of SoxA and SoxX. Heme c is required as a cofactor. Zn(2+) serves as cofactor. In terms of processing, cysteine persulfide at Cys-251.

It localises to the periplasm. The enzyme catalyses L-cysteinyl-[SoxY protein] + thiosulfate + 2 Fe(III)-[cytochrome c] = S-sulfosulfanyl-L-cysteinyl-[SoxY protein] + 2 Fe(II)-[cytochrome c] + 2 H(+). It carries out the reaction S-sulfanyl-L-cysteinyl-[SoxY protein] + thiosulfate + 2 Fe(III)-[cytochrome c] = S-(2-sulfodisulfanyl)-L-cysteinyl-[SoxY protein] + 2 Fe(II)-[cytochrome c] + 2 H(+). Functionally, C-type diheme cytochrome, which is part of the SoxAX cytochrome complex involved in sulfur oxidation. The SoxAX complex catalyzes the formation of a heterodisulfide bond between the conserved cysteine residue on a sulfur carrier SoxYZ complex subunit SoxY and thiosulfate or other inorganic sulfur substrates. This leads to the liberation of two electrons, which may be transferred from the SoxAX complex to another cytochrome c that then channels them into the respiratory electron transport chain. Some electrons may be used for reductive CO(2) fixation. This chain is L-cysteine S-thiosulfotransferase subunit SoxA, found in Paracoccus pantotrophus (Thiosphaera pantotropha).